We begin with the raw amino-acid sequence, 177 residues long: Dihydrofolate reductase type 9 (177 aa).

Residues 3–167 (SLNMIVAVNK…TKLIFQIWIN (165 aa)) enclose the DHFR domain.

The protein belongs to the dihydrofolate reductase family. Homodimer.

The catalysed reaction is (6S)-5,6,7,8-tetrahydrofolate + NADP(+) = 7,8-dihydrofolate + NADPH + H(+). It participates in cofactor biosynthesis; tetrahydrofolate biosynthesis; 5,6,7,8-tetrahydrofolate from 7,8-dihydrofolate: step 1/1. Key enzyme in folate metabolism. Catalyzes an essential reaction for de novo glycine and purine synthesis, and for DNA precursor synthesis. The chain is Dihydrofolate reductase type 9 (dhfrIX) from Escherichia coli.